The chain runs to 562 residues: Formate--tetrahydrofolate ligase (562 aa).

70–77 (TPAGEGKS) contacts ATP.

It belongs to the formate--tetrahydrofolate ligase family.

The enzyme catalyses (6S)-5,6,7,8-tetrahydrofolate + formate + ATP = (6R)-10-formyltetrahydrofolate + ADP + phosphate. The protein operates within one-carbon metabolism; tetrahydrofolate interconversion. The polypeptide is Formate--tetrahydrofolate ligase (Paenarthrobacter aurescens (strain TC1)).